The primary structure comprises 276 residues: NAD kinase (276 aa).

Aspartate 66 serves as the catalytic Proton acceptor. NAD(+) is bound by residues 66-67 (DG), 139-140 (ND), aspartate 168, 179-184 (TAYNIS), and glutamine 234.

Belongs to the NAD kinase family. A divalent metal cation is required as a cofactor.

Its subcellular location is the cytoplasm. The catalysed reaction is NAD(+) + ATP = ADP + NADP(+) + H(+). Functionally, involved in the regulation of the intracellular balance of NAD and NADP, and is a key enzyme in the biosynthesis of NADP. Catalyzes specifically the phosphorylation on 2'-hydroxyl of the adenosine moiety of NAD to yield NADP. This is NAD kinase from Campylobacter lari (strain RM2100 / D67 / ATCC BAA-1060).